A 511-amino-acid chain; its full sequence is Cytochrome P450 76C4 (511 aa).

The helical transmembrane segment at 3 to 23 threads the bilayer; sequence IISGQALFLLFCFISSCFLIS. C450 is a binding site for heme.

Belongs to the cytochrome P450 family. The cofactor is heme.

The protein localises to the membrane. The polypeptide is Cytochrome P450 76C4 (CYP76C4) (Arabidopsis thaliana (Mouse-ear cress)).